Consider the following 124-residue polypeptide: Insulin-like growth factor 1 (124 aa).

A propeptide spanning residues 1 to 19 is cleaved from the precursor; sequence IHFFYLGLCLLTLTSSAAA. The segment at 20 to 48 is b; sequence GPETLCGAELVDALQFVCGDRGFYFSKPT. Disulfide bonds link C25-C67, C37-C80, and C66-C71. The c stretch occupies residues 49 to 60; sequence GYGSSSRRLHHK. The a stretch occupies residues 61 to 81; that stretch reads GIVDECCFQSCDLRRLEMYCA. Positions 82-89 are d; sequence PIKPPKSA. A disordered region spans residues 86-124; sequence PKSARSVRAQRHTDMPKAQKEVHLKNTSRGNTGNRNYRM. The propeptide at 90 to 124 is e peptide; it reads RSVRAQRHTDMPKAQKEVHLKNTSRGNTGNRNYRM. Positions 96–109 are enriched in basic and acidic residues; the sequence is RHTDMPKAQKEVHL. Positions 110 to 124 are enriched in polar residues; it reads KNTSRGNTGNRNYRM.

Belongs to the insulin family.

The protein localises to the secreted. In terms of biological role, the insulin-like growth factors, isolated from plasma, are structurally and functionally related to insulin but have a much higher growth-promoting activity. Acts as a ligand for IGF1R. Binds to the alpha subunit of IGF1R, leading to the activation of the intrinsic tyrosine kinase activity which autophosphorylates tyrosine residues in the beta subunit thus initiatiating a cascade of down-stream signaling events leading to activation of the PI3K-AKT/PKB and the Ras-MAPK pathways. Binds to integrins. Its binding to integrins and subsequent ternary complex formation with integrins and IGFR1 are essential for IGF1 signaling. The protein is Insulin-like growth factor 1 of Coturnix japonica (Japanese quail).